A 199-amino-acid chain; its full sequence is Protein GrpE (199 aa).

Residues 1–24 (MSKQNKKDWKKFKDEHKEEHKVEN) are compositionally biased toward basic and acidic residues. The interval 1–47 (MSKQNKKDWKKFKDEHKEEHKVENEILEEEIDEKSQHQEPALGHPSY) is disordered.

Belongs to the GrpE family. In terms of assembly, homodimer.

Its subcellular location is the cytoplasm. Participates actively in the response to hyperosmotic and heat shock by preventing the aggregation of stress-denatured proteins, in association with DnaK and GrpE. It is the nucleotide exchange factor for DnaK and may function as a thermosensor. Unfolded proteins bind initially to DnaJ; upon interaction with the DnaJ-bound protein, DnaK hydrolyzes its bound ATP, resulting in the formation of a stable complex. GrpE releases ADP from DnaK; ATP binding to DnaK triggers the release of the substrate protein, thus completing the reaction cycle. Several rounds of ATP-dependent interactions between DnaJ, DnaK and GrpE are required for fully efficient folding. This is Protein GrpE from Legionella pneumophila (strain Paris).